Reading from the N-terminus, the 236-residue chain is UPF0257 lipoprotein YnfC (236 aa).

Positions 1–16 are cleaved as a signal peptide; that stretch reads MKKPLLLTLLCMILAG. Residue Cys17 is the site of N-palmitoyl cysteine attachment. Cys17 carries S-diacylglycerol cysteine lipidation.

This sequence belongs to the UPF0257 family.

The protein resides in the cell membrane. This Salmonella dublin (strain CT_02021853) protein is UPF0257 lipoprotein YnfC.